Here is a 413-residue protein sequence, read N- to C-terminus: Lamin tail domain-containing protein 1 (413 aa).

2 disordered regions span residues 1 to 25 (MMKE…VQDG) and 102 to 128 (HKDS…SDVD). The span at 107–128 (LGKQSTSSMVPRRQPQSSSDVD) shows a compositional bias: polar residues. One can recognise an LTD domain in the interval 169-287 (EVGQFTSSSL…EAIAWYTPIH (119 aa)). The interval 356 to 413 (LPNKSPWCRNPNTSPHPYSSLIDSHDSDISESSLDTQLKPQPTKPKPDPGTKKKKAKS) is disordered. Residues 385–396 (SESSLDTQLKPQ) show a composition bias toward low complexity.

The protein belongs to the intermediate filament family.

The chain is Lamin tail domain-containing protein 1 (Lmntd1) from Mus musculus (Mouse).